The following is a 139-amino-acid chain: Ribosomal RNA large subunit methyltransferase H (139 aa).

Residues leucine 57, glycine 88, and 107 to 112 (LSAMTF) each bind S-adenosyl-L-methionine.

The protein belongs to the RNA methyltransferase RlmH family. In terms of assembly, homodimer.

The protein resides in the cytoplasm. The catalysed reaction is pseudouridine(1915) in 23S rRNA + S-adenosyl-L-methionine = N(3)-methylpseudouridine(1915) in 23S rRNA + S-adenosyl-L-homocysteine + H(+). Its function is as follows. Specifically methylates the pseudouridine at position 1915 (m3Psi1915) in 23S rRNA. This chain is Ribosomal RNA large subunit methyltransferase H, found in Solibacter usitatus (strain Ellin6076).